We begin with the raw amino-acid sequence, 101 residues long: Small ribosomal subunit protein uS10 (101 aa).

The protein belongs to the universal ribosomal protein uS10 family. Part of the 30S ribosomal subunit.

In terms of biological role, involved in the binding of tRNA to the ribosomes. The chain is Small ribosomal subunit protein uS10 from Flavobacterium johnsoniae (strain ATCC 17061 / DSM 2064 / JCM 8514 / BCRC 14874 / CCUG 350202 / NBRC 14942 / NCIMB 11054 / UW101) (Cytophaga johnsonae).